The following is a 105-amino-acid chain: Pyrimidine/purine nucleoside phosphorylase (105 aa).

The protein belongs to the nucleoside phosphorylase PpnP family.

It catalyses the reaction a purine D-ribonucleoside + phosphate = a purine nucleobase + alpha-D-ribose 1-phosphate. The enzyme catalyses adenosine + phosphate = alpha-D-ribose 1-phosphate + adenine. The catalysed reaction is cytidine + phosphate = cytosine + alpha-D-ribose 1-phosphate. It carries out the reaction guanosine + phosphate = alpha-D-ribose 1-phosphate + guanine. It catalyses the reaction inosine + phosphate = alpha-D-ribose 1-phosphate + hypoxanthine. The enzyme catalyses thymidine + phosphate = 2-deoxy-alpha-D-ribose 1-phosphate + thymine. The catalysed reaction is uridine + phosphate = alpha-D-ribose 1-phosphate + uracil. It carries out the reaction xanthosine + phosphate = alpha-D-ribose 1-phosphate + xanthine. Its function is as follows. Catalyzes the phosphorolysis of diverse nucleosides, yielding D-ribose 1-phosphate and the respective free bases. Can use uridine, adenosine, guanosine, cytidine, thymidine, inosine and xanthosine as substrates. Also catalyzes the reverse reactions. In Ralstonia nicotianae (strain ATCC BAA-1114 / GMI1000) (Ralstonia solanacearum), this protein is Pyrimidine/purine nucleoside phosphorylase.